The sequence spans 427 residues: MLSKSEAAYKEALRYIPGGVDSPVRAFKSVGGVPPFIDRGEGAFLYDIDGNRYIDYVQSWGPLIFGHADKETLEAVCEQAQKGLSFGTPTLLETELAREIVELFDNIDKIRFVSSGTEAVMSAIRLARGYTGRDDIVKFEGCYHGHSDSLLVSAGSGAATFGNPSSPGVPADFTKHTLLARYNDIESVKRCFQASDNIACVIIEPIAGNMGLVPAEEEFLQDLRKLCDEHGALLIFDEVMSGFRASLKGAQGFTSVVPDMVTFGKVIGGGMPVGAFGARAEIMAHLSPEGPVYQAGTLSGNPVAMVAGLSVIRRLKNDPSIYEVLEARAKGLVGGFKKIADSFGVPLQVDVRGSMFGFFFNEKPVKNFDDAKQSDLEFFAKFHQEMIKRGIYFACSQFEAGFICTPLDEKLIDETLEKIEEGLKKIV.

N6-(pyridoxal phosphate)lysine is present on lysine 265.

This sequence belongs to the class-III pyridoxal-phosphate-dependent aminotransferase family. HemL subfamily. As to quaternary structure, homodimer. Requires pyridoxal 5'-phosphate as cofactor.

Its subcellular location is the cytoplasm. It carries out the reaction (S)-4-amino-5-oxopentanoate = 5-aminolevulinate. It functions in the pathway porphyrin-containing compound metabolism; protoporphyrin-IX biosynthesis; 5-aminolevulinate from L-glutamyl-tRNA(Glu): step 2/2. This is Glutamate-1-semialdehyde 2,1-aminomutase from Nitratiruptor sp. (strain SB155-2).